The sequence spans 281 residues: Cytochrome c oxidase subunit 3 (281 aa).

7 helical membrane-spanning segments follow: residues Pro-34–Phe-54, Asn-59–Phe-79, Gly-103–Phe-123, Trp-148–Ala-168, Val-179–Phe-199, Ala-220–Phe-240, and Ile-259–Trp-279.

It belongs to the cytochrome c oxidase subunit 3 family. In terms of assembly, component of the cytochrome c oxidase (complex IV, CIV), a multisubunit enzyme composed of a catalytic core of 3 subunits and several supernumerary subunits. The complex exists as a monomer or a dimer and forms supercomplexes (SCs) in the inner mitochondrial membrane with ubiquinol-cytochrome c oxidoreductase (cytochrome b-c1 complex, complex III, CIII).

The protein localises to the mitochondrion inner membrane. It carries out the reaction 4 Fe(II)-[cytochrome c] + O2 + 8 H(+)(in) = 4 Fe(III)-[cytochrome c] + 2 H2O + 4 H(+)(out). Its function is as follows. Component of the cytochrome c oxidase, the last enzyme in the mitochondrial electron transport chain which drives oxidative phosphorylation. The respiratory chain contains 3 multisubunit complexes succinate dehydrogenase (complex II, CII), ubiquinol-cytochrome c oxidoreductase (cytochrome b-c1 complex, complex III, CIII) and cytochrome c oxidase (complex IV, CIV), that cooperate to transfer electrons derived from NADH and succinate to molecular oxygen, creating an electrochemical gradient over the inner membrane that drives transmembrane transport and the ATP synthase. Cytochrome c oxidase is the component of the respiratory chain that catalyzes the reduction of oxygen to water. Electrons originating from reduced cytochrome c in the intermembrane space (IMS) are transferred via the dinuclear copper A center (CU(A)) of subunit 2 and heme A of subunit 1 to the active site in subunit 1, a binuclear center (BNC) formed by heme A3 and copper B (CU(B)). The BNC reduces molecular oxygen to 2 water molecules using 4 electrons from cytochrome c in the IMS and 4 protons from the mitochondrial matrix. The chain is Cytochrome c oxidase subunit 3 (COX3) from Rhizopus stolonifer (Rhizopus nigricans).